Here is a 404-residue protein sequence, read N- to C-terminus: MKKIYDLWVRVSLIKKIGIGVVIGVMLGILAPDLTGFSILGKLFVGGLKAIAPLLVFALVSQAISHQKKGKQTNMTLIIVLYLFGTFASALVAVLTAYLFPLTLVLNTPVNTELSPPQGVAEVFQSLLLKLVDNPINALATANYIGVLSWAIIFGLALKAASKETKHLIKTAAEVTSQIVVWIINLAPIGIMSLVFTTISENGVGILSDYAFLILVLVGTMLFVALVVNPLIAVLITRQNPYPLVLRCLRESGLTAFFTRSSAANIPVNMQLCQKIGLSKDTYSVSIPLGATINMGGAAITINVLTLAAVHTFGIPIDFLTALLLSVVAAVSACGASGVAGGSLLLIPVACSLFGISNDLAMQVVGVGFIVGVIQDSCETALNSSTDVLFTAIAENAFWKRKKA.

8 helical membrane passes run Ile17–Phe37, Ile39–Leu59, Met75–Leu95, Ala138–Leu158, Ile179–Ile199, Phe212–Ile232, Ile287–Leu307, and Phe313–Ala333.

It belongs to the dicarboxylate/amino acid:cation symporter (DAACS) (TC 2.A.23) family.

It is found in the cell membrane. It catalyses the reaction L-serine(in) + Na(+)(in) = L-serine(out) + Na(+)(out). It carries out the reaction L-threonine(in) + Na(+)(in) = L-threonine(out) + Na(+)(out). Functionally, involved in the import of serine and threonine into the cell, with the concomitant import of sodium (symport system). This is Serine/threonine transporter SstT from Streptococcus pyogenes serotype M1.